Reading from the N-terminus, the 249-residue chain is FMN reductase (NADPH) (249 aa).

Belongs to the flavin oxidoreductase frp family. As to quaternary structure, homodimer.

The catalysed reaction is FMNH2 + NADP(+) = FMN + NADPH + 2 H(+). Functionally, reduces FMNH(2) to FMN, with NADPH as reductant. It also reduces nitroaromatic compounds, quinones and azo dyes. The chain is FMN reductase (NADPH) (nfrA1) from Bacillus subtilis (strain 168).